We begin with the raw amino-acid sequence, 450 residues long: ATP-dependent protease ATPase subunit HslU (450 aa).

Residues Val29, 71 to 76 (GVGKTE), Asp261, Glu328, and Arg400 each bind ATP.

The protein belongs to the ClpX chaperone family. HslU subfamily. A double ring-shaped homohexamer of HslV is capped on each side by a ring-shaped HslU homohexamer. The assembly of the HslU/HslV complex is dependent on binding of ATP.

The protein resides in the cytoplasm. Its function is as follows. ATPase subunit of a proteasome-like degradation complex; this subunit has chaperone activity. The binding of ATP and its subsequent hydrolysis by HslU are essential for unfolding of protein substrates subsequently hydrolyzed by HslV. HslU recognizes the N-terminal part of its protein substrates and unfolds these before they are guided to HslV for hydrolysis. In Rickettsia rickettsii (strain Iowa), this protein is ATP-dependent protease ATPase subunit HslU.